Reading from the N-terminus, the 489-residue chain is Protein translocase subunit SecY (489 aa).

Residues 1 to 20 lie on the Cytoplasmic side of the membrane; it reads MGWKDAAEPVLSRMPAVARP. The chain crosses the membrane as a helical span at residues 21 to 47; sequence EGHVPFRRKLGWTGGILVLYFFLTNVT. Topologically, residues 48–59 are extracellular; it reads LFGLDAATANDL. Residues 60–67 constitute an intramembrane region (helical); that stretch reads FGQFRSIL. A discontinuously helical transmembrane segment spans residues 60 to 88; the sequence is FGQFRSILAGQQGSVLQLGIGPIVTASIV. Residues 68-79 lie within the membrane without spanning it; it reads AGQQGSVLQLGI. An intramembrane region (helical) is located at residues 80-88; sequence GPIVTASIV. Over 89 to 110 the chain is Cytoplasmic; it reads LQLLGGADLLGLDTDNNPRDQV. The chain crosses the membrane as a helical span at residues 111–135; the sequence is LYQGLQKLLVGVMICLTGLPMVFAG. At 136-153 the chain is on the extracellular side; that stretch reads NFLPADQAVATSLGIGTV. Residues 154–178 traverse the membrane as a helical segment; it reads GVKGLIFAQIAVGGVLILFMDEIVS. At 179 to 184 the chain is on the cytoplasmic side; sequence KWGVGS. A helical membrane pass occupies residues 185–203; the sequence is GVGLFIIAGVSQQLVGGLF. Residues 204 to 244 are Extracellular-facing; that stretch reads SWQGLGGTSGFFATWIGIITGAIELPASPTDLLSTVFLGQG. A helical membrane pass occupies residues 245–266; it reads QLLALITTLLIFGIVVYAESVR. Over 267–291 the chain is Cytoplasmic; that stretch reads VEIPLSHARVKGARGRFPVKLIYAS. The chain crosses the membrane as a helical span at residues 292–313; it reads VLPMILVRALQANIQFLGRFLN. At 314–364 the chain is on the extracellular side; it reads SSWVGMPAWLGQYTSGQVTGGLLYYLAPIQSRSDWMWFLGLTSADPLDIAI. Residues 365-384 traverse the membrane as a helical segment; the sequence is RVLIDLIFMIVGGAVFAIFW. Residues 385 to 427 lie on the Cytoplasmic side of the membrane; sequence VETTGMGPKSTAQQIQNSGMQIPGFRRNPQVIERVMERYIPQV. Residues 428–446 traverse the membrane as a helical segment; it reads TVIGGALVGLLAVMANMLG. At 447–450 the chain is on the extracellular side; that stretch reads TIGA. The chain crosses the membrane as a helical span at residues 451-465; it reads VSGTGLLLTVSITYK. At 466-488 the chain is on the cytoplasmic side; the sequence is LYEEIAEEQLMEMHPMMRNMFGS.

Belongs to the SecY/SEC61-alpha family. In terms of assembly, component of the Sec protein translocase complex. Heterotrimer consisting of alpha (SecY), beta (SecG) and gamma (SecE) subunits. The heterotrimers can form oligomers, although 1 heterotrimer is thought to be able to translocate proteins. Interacts with the ribosome. May interact with SecDF, and other proteins may be involved.

It localises to the cell membrane. In terms of biological role, the central subunit of the protein translocation channel SecYEG. Consists of two halves formed by TMs 1-5 and 6-10. These two domains form a lateral gate at the front which open onto the bilayer between TMs 2 and 7, and are clamped together by SecE at the back. The channel is closed by both a pore ring composed of hydrophobic SecY resides and a short helix (helix 2A) on the extracellular side of the membrane which forms a plug. The plug probably moves laterally to allow the channel to open. The ring and the pore may move independently. This is Protein translocase subunit SecY from Haloferax volcanii (strain ATCC 29605 / DSM 3757 / JCM 8879 / NBRC 14742 / NCIMB 2012 / VKM B-1768 / DS2) (Halobacterium volcanii).